A 217-amino-acid polypeptide reads, in one-letter code: Adenylate kinase (217 aa).

10 to 15 (GAGKGT) is a binding site for ATP. Residues 30–59 (STGDMFRAAMKEGTPLGLQAKQYMDRGDLV) form an NMP region. AMP contacts are provided by residues threonine 31, arginine 36, 57–59 (DLV), 85–88 (GFPR), and glutamine 92. An LID region spans residues 126 to 163 (GRRICRNCGATYHLIFHPPAKPGVCDKCGGELYQRADD). Residue arginine 127 participates in ATP binding. Residues cysteine 130 and cysteine 133 each contribute to the Zn(2+) site. Residue 136–137 (TY) participates in ATP binding. Zn(2+) contacts are provided by cysteine 150 and cysteine 153. AMP contacts are provided by arginine 160 and arginine 171. An ATP-binding site is contributed by glutamine 199.

Belongs to the adenylate kinase family. Monomer.

The protein localises to the cytoplasm. The enzyme catalyses AMP + ATP = 2 ADP. The protein operates within purine metabolism; AMP biosynthesis via salvage pathway; AMP from ADP: step 1/1. Catalyzes the reversible transfer of the terminal phosphate group between ATP and AMP. Plays an important role in cellular energy homeostasis and in adenine nucleotide metabolism. The polypeptide is Adenylate kinase (Geobacillus stearothermophilus (Bacillus stearothermophilus)).